The primary structure comprises 242 residues: Type III pantothenate kinase (242 aa).

7–14 (DLGNSRFK) provides a ligand contact to ATP. Substrate contacts are provided by residues Tyr91 and 98–101 (GVDR). Residue Asp100 is the Proton acceptor of the active site. An ATP-binding site is contributed by Thr121. Thr171 is a binding site for substrate.

Belongs to the type III pantothenate kinase family. As to quaternary structure, homodimer. NH4(+) is required as a cofactor. Requires K(+) as cofactor.

The protein localises to the cytoplasm. It catalyses the reaction (R)-pantothenate + ATP = (R)-4'-phosphopantothenate + ADP + H(+). The protein operates within cofactor biosynthesis; coenzyme A biosynthesis; CoA from (R)-pantothenate: step 1/5. Catalyzes the phosphorylation of pantothenate (Pan), the first step in CoA biosynthesis. This Xylella fastidiosa (strain M23) protein is Type III pantothenate kinase.